We begin with the raw amino-acid sequence, 390 residues long: MSTHFDVIVVGAGSMGMAAGYQLAKQGVKTLLVDAFDPPHTNGSHHGDTRIIRHAYGEGREYVPLALRSQELWYELEKETHHKIFTKTGVLVFGPKGESAFVAETMEAAKEHSLTVDLLEGDEINKRWPGITVPENYNAIFEPNSGVLFSENCIRAYRELAEARGAKVLTHTRVEDFDISPDSVKIETANGSYTADKLIVSMGAWNSKLLSKLNLDIPLQPYRQVVGFFESDESKYSNDIDFPGFMVEVPNGIYYGFPSFGGCGLKLGYHTFGQKIDPDTINREFGVYPEDESNLRAFLEEYMPGANGELKRGAVCMYTKTLDEHFIIDLHPEHSNVVIAAGFSGHGFKFSSGVGEVLSQLALTGKTEHDISIFSINRPALKESLQKTTI.

6–36 (DVIVVGAGSMGMAAGYQLAKQGVKTLLVDAF) serves as a coordination point for FAD. S-8alpha-FAD cysteine is present on cysteine 316.

Monomer. FAD serves as cofactor.

Its subcellular location is the cytoplasm. It catalyses the reaction sarcosine + O2 + H2O = formaldehyde + glycine + H2O2. Pyrrole-2-carboxylate is a competitive inhibitor. N-(cyclopropyl)glycine (CPG) is a mechanism-based inhibitor and inactivates the enzyme by covalently modifying the flavin. Catalyzes the oxidative demethylation of sarcosine. Can also oxidize other secondary amino acids such as N-methyl-L-alanine. The sequence is that of Monomeric sarcosine oxidase (soxA) from Bacillus sp. (strain B-0618).